The primary structure comprises 556 residues: Delta-1-pyrroline-5-carboxylate dehydrogenase, mitochondrial (556 aa).

Residues 1-17 (MLRARSAVSQSWKGFKT) constitute a mitochondrion transit peptide. NAD(+) is bound by residues Lys-226 and 279-283 (GSVPT). The active-site Proton acceptor is the Glu-307. Catalysis depends on Cys-341, which acts as the Nucleophile. Glu-440 is an NAD(+) binding site. Ser-506 provides a ligand contact to substrate.

The protein belongs to the aldehyde dehydrogenase family.

Its subcellular location is the mitochondrion matrix. It carries out the reaction L-glutamate 5-semialdehyde + NAD(+) + H2O = L-glutamate + NADH + 2 H(+). The protein operates within amino-acid degradation; L-proline degradation into L-glutamate; L-glutamate from L-proline: step 2/2. In terms of biological role, irreversible conversion of delta-1-pyrroline-5-carboxylate (P5C), derived either from proline or ornithine, to glutamate. This is a necessary step in the pathway interconnecting the urea and tricarboxylic acid cycles. The polypeptide is Delta-1-pyrroline-5-carboxylate dehydrogenase, mitochondrial (aldh4a1) (Danio rerio (Zebrafish)).